Here is a 242-residue protein sequence, read N- to C-terminus: Ubiquitin-conjugating enzyme E2 6 (242 aa).

Residues 1–217 (MASRQAYKRL…QPAGNGTTSN (217 aa)) lie on the Cytoplasmic side of the membrane. The UBC core domain occupies 5 to 163 (QAYKRLSKEY…FPELAEQNRR (159 aa)). Cysteine 87 (glycyl thioester intermediate) is an active-site residue. The chain crosses the membrane as a helical span at residues 218 to 240 (SIGRSLLFVLFSLAALLVAVCYT).

It belongs to the ubiquitin-conjugating enzyme family.

Its subcellular location is the endoplasmic reticulum membrane. The enzyme catalyses S-ubiquitinyl-[E1 ubiquitin-activating enzyme]-L-cysteine + [E2 ubiquitin-conjugating enzyme]-L-cysteine = [E1 ubiquitin-activating enzyme]-L-cysteine + S-ubiquitinyl-[E2 ubiquitin-conjugating enzyme]-L-cysteine.. It functions in the pathway protein modification; protein ubiquitination. Its function is as follows. Catalyzes the covalent attachment of ubiquitin to other proteins. Functions in degradation of misfolded or regulated proteins localized in the endoplasmic reticulum (ER) lumen or membrane via the ubiquitin-proteasome system. Cognate E2 conjugating enzyme for the DOA10 ubiquitin ligase complex, which is part of the ERAD-C pathway responsible for the rapid degradation of membrane proteins with misfolded cytoplasmic domains. The chain is Ubiquitin-conjugating enzyme E2 6 (UBC6) from Eremothecium gossypii (strain ATCC 10895 / CBS 109.51 / FGSC 9923 / NRRL Y-1056) (Yeast).